A 260-amino-acid chain; its full sequence is UPF0294 protein YE0917 (260 aa).

It belongs to the UPF0294 family.

It is found in the cytoplasm. This chain is UPF0294 protein YE0917, found in Yersinia enterocolitica serotype O:8 / biotype 1B (strain NCTC 13174 / 8081).